The primary structure comprises 393 residues: 8-amino-7-oxononanoate synthase (393 aa).

Arginine 18 lines the substrate pocket. 105-106 (GY) is a pyridoxal 5'-phosphate binding site. Histidine 130 is a substrate binding site. 3 residues coordinate pyridoxal 5'-phosphate: serine 178, histidine 206, and threonine 234. Position 237 is an N6-(pyridoxal phosphate)lysine (lysine 237). Residue threonine 353 coordinates substrate.

This sequence belongs to the class-II pyridoxal-phosphate-dependent aminotransferase family. BioF subfamily. Homodimer. Pyridoxal 5'-phosphate serves as cofactor.

The enzyme catalyses 6-carboxyhexanoyl-[ACP] + L-alanine + H(+) = (8S)-8-amino-7-oxononanoate + holo-[ACP] + CO2. It functions in the pathway cofactor biosynthesis; biotin biosynthesis. Its function is as follows. Catalyzes the decarboxylative condensation of pimeloyl-[acyl-carrier protein] and L-alanine to produce 8-amino-7-oxononanoate (AON), [acyl-carrier protein], and carbon dioxide. The sequence is that of 8-amino-7-oxononanoate synthase from Geotalea daltonii (strain DSM 22248 / JCM 15807 / FRC-32) (Geobacter daltonii).